We begin with the raw amino-acid sequence, 79 residues long: uncharacterized protein (79 aa).

2 consecutive transmembrane segments (helical) span residues 28-48 (CIIL…ALLA) and 51-71 (VALT…AFTV).

Its subcellular location is the cell membrane. This is an uncharacterized protein from Methanocaldococcus jannaschii (strain ATCC 43067 / DSM 2661 / JAL-1 / JCM 10045 / NBRC 100440) (Methanococcus jannaschii).